Here is a 1005-residue protein sequence, read N- to C-terminus: Small G protein signaling modulator 2 (1005 aa).

The RUN domain maps to 34–191; that stretch reads HEDSSHIIAL…EYTKLKTADH (158 aa). Disordered regions lie at residues 95–121 and 205–236; these read QAEGRKPSGGSQEALRKQGSTGGKAPA and HRIRGPPNRQDSPAKRPALGIRKRHSSGSASE. Serine 402 and leucine 444 each carry phosphoserine. Residues 566–938 form the Rab-GAP TBC domain; it reads GVEHEIRKDV…AVWEVIWAAR (373 aa). Disordered stretches follow at residues 657–687 and 729–761; these read FISVDDLEPSGPQDLEDSKPKREQEPGAGTP and GFEDDGAGEDGSEGPATAAHTFPGPHDPGQETL. Basic and acidic residues predominate over residues 672-681; that stretch reads EDSKPKREQE. Positions 730 to 740 are enriched in acidic residues; it reads FEDDGAGEDGS.

The protein belongs to the RUTBC family. As to quaternary structure, interacts with RAB4A, RAB11A, RAP1A, RAP1B, RAP2A and RAP2B. No interaction with RAB27A. Interacts with RAB9A. Widely expressed.

The protein resides in the cytoplasm. It localises to the melanosome. Functionally, possesses GTPase activator activity towards RAB32, RAB33B and RAB38. Regulates the trafficking of melanogenic enzymes TYR, TYRP1 and DCT/TYRP2 to melanosomes in melanocytes by inactivating RAB32 and RAB38. Inhibits RAB32 and RAB38 activation both directly by promoting their GTPase activity and indirectly by disrupting the RAB9A-HPS4 interaction which is required for RAB32/38 activation. In Mus musculus (Mouse), this protein is Small G protein signaling modulator 2 (Sgsm2).